Reading from the N-terminus, the 152-residue chain is Large ribosomal subunit protein uL22 (152 aa).

Residues 124-145 (APKKAAAKKAAPAKETTPAATE) show a composition bias toward low complexity. The tract at residues 124–152 (APKKAAAKKAAPAKETTPAATESKTEGAE) is disordered.

It belongs to the universal ribosomal protein uL22 family. As to quaternary structure, part of the 50S ribosomal subunit.

This protein binds specifically to 23S rRNA; its binding is stimulated by other ribosomal proteins, e.g. L4, L17, and L20. It is important during the early stages of 50S assembly. It makes multiple contacts with different domains of the 23S rRNA in the assembled 50S subunit and ribosome. Functionally, the globular domain of the protein is located near the polypeptide exit tunnel on the outside of the subunit, while an extended beta-hairpin is found that lines the wall of the exit tunnel in the center of the 70S ribosome. The chain is Large ribosomal subunit protein uL22 from Salinispora tropica (strain ATCC BAA-916 / DSM 44818 / JCM 13857 / NBRC 105044 / CNB-440).